A 291-amino-acid chain; its full sequence is Small ribosomal subunit protein uS2 (291 aa).

The interval 256–291 (LRGEGTAPAASEEQPAEEPAPAAAEAQTDAAVGTAV) is disordered. The span at 261–291 (TAPAASEEQPAEEPAPAAAEAQTDAAVGTAV) shows a compositional bias: low complexity.

This sequence belongs to the universal ribosomal protein uS2 family.

The sequence is that of Small ribosomal subunit protein uS2 from Frankia alni (strain DSM 45986 / CECT 9034 / ACN14a).